The chain runs to 344 residues: Protein L-Myc-1-A (344 aa).

Disordered stretches follow at residues 100–162 (RLTT…DDEI) and 209–261 (PPEP…EDIV). Polar residues-rich tracts occupy residues 102–112 (TTASPRATNPQ), 123–133 (PGVNSIEQNAN), and 236–255 (PALQQCSSPMPGSPLASGSS). Residues 261–313 (VKKKNHNYLERKRRNDLRSRFLALREEVPSLTRSTKTPKVVVLSKATEFLKGL) form the bHLH domain. The tract at residues 313–341 (LVIQEQQLTAEKFKLWSRHQQLLRRISHL) is leucine-zipper.

In terms of assembly, efficient DNA binding requires dimerization with another bHLH protein. Binds DNA as a heterodimer with MAX. High levels in oocytes, modest levels in kidney and low levels in spleen.

Its subcellular location is the nucleus. The chain is Protein L-Myc-1-A (mycl1-a) from Xenopus laevis (African clawed frog).